The following is a 119-amino-acid chain: Ergochrome gene cluster protein CPUR_05426 (119 aa).

The protein operates within pigment biosynthesis. Its function is as follows. Part of the ergochrome gene cluster responsible for the typical purple-black color of the ergot sclerotia. The ergochrome gene cluster produces several ergot pigments including the yellow ergochrome secalonic acid and its derivatives, as well as the red anthraquinones endocrocin and clavorubin. The pathway begins with the synthesis of atrochrysone thioester by the polyketide synthase (PKS) CPUR_05437. The atrochrysone carboxyl ACP thioesterase CPUR_05436 then breaks the thioester bond and releases the atrochrysone carboxylic acid from CPUR_05437. The atrochrysone carboxylic acid is then converted to atrochrysone which is further transformed into emodin anthrone. The next step is performed by the anthrone oxygenase CPUR_05434 that catalyzes the oxidation of emodinanthrone to emodin. Emodin is further modified to yield monodictyphenone via several steps involving CPUR_05427, CPUR_05428, CPUR_05429 and CPUR_05430. The short chain dehydrogenase/reductase CPUR_05418 then catalyzes the C-5 ketoreduction to give the xanthone skeleton of the monomeric units. Ergochromes formation requires further dimerization steps of different xanthone units, probably catalyzed by the cytochrome P450 monooxygenase CPUR_05419. CPUR_05425, CPUR_05426 and CPUR_05431 are unique to Claviceps, thus it is likely that they are involved in further modification of xanthone units or in their dimerization. The yellow ergochromes and the red anthraquinone pigments endocrocin and clavorubin are products from the same PKS derived precursors and the latter are likely shunt products in the pathway of xanthone biosynthesis. It is proposed that atrochrysone carboxylic acid released from the PKS CPUR_05437 can also be converted to endocrocin anthrone which is further oxidized into endocrocin by CPUR_05435. Endocrocin could be then modified to clavorubin, possibly by CPUR_05423 and CPUR_05431. Clavorubin is the principal anthraquinone metabolite produced by the cluster with a much higher yield compared to endocrocin. This is Ergochrome gene cluster protein CPUR_05426 from Claviceps purpurea (strain 20.1) (Ergot fungus).